The chain runs to 61 residues: MARKAIIEKWSKTPKYKTRAYTRCRICGRPHAVLKKYGVCRICFRELAYKGEIPGCRKASW.

Cysteine 24, cysteine 27, cysteine 40, and cysteine 43 together coordinate Zn(2+).

Belongs to the universal ribosomal protein uS14 family. Zinc-binding uS14 subfamily. In terms of assembly, part of the 30S ribosomal subunit. Contacts proteins S3 and S10. Zn(2+) serves as cofactor.

Functionally, binds 16S rRNA, required for the assembly of 30S particles and may also be responsible for determining the conformation of the 16S rRNA at the A site. In Clostridium beijerinckii (strain ATCC 51743 / NCIMB 8052) (Clostridium acetobutylicum), this protein is Small ribosomal subunit protein uS14.